A 441-amino-acid polypeptide reads, in one-letter code: Ribosomal protein uS12 methylthiotransferase RimO (441 aa).

Residues 8–118 form the MTTase N-terminal domain; sequence PKIGFVSLGC…VLEHVHHYVP (111 aa). Positions 17, 53, 82, 150, 154, and 157 each coordinate [4Fe-4S] cluster. Positions 136 to 373 constitute a Radical SAM core domain; sequence LTPRHYAYLK…MQLQQQISAE (238 aa). Positions 376–441 constitute a TRAM domain; it reads QEKVGREILV…DEYDLWGSRV (66 aa).

The protein belongs to the methylthiotransferase family. RimO subfamily. Requires [4Fe-4S] cluster as cofactor.

The protein localises to the cytoplasm. It carries out the reaction L-aspartate(89)-[ribosomal protein uS12]-hydrogen + (sulfur carrier)-SH + AH2 + 2 S-adenosyl-L-methionine = 3-methylsulfanyl-L-aspartate(89)-[ribosomal protein uS12]-hydrogen + (sulfur carrier)-H + 5'-deoxyadenosine + L-methionine + A + S-adenosyl-L-homocysteine + 2 H(+). Its function is as follows. Catalyzes the methylthiolation of an aspartic acid residue of ribosomal protein uS12. The chain is Ribosomal protein uS12 methylthiotransferase RimO from Shigella sonnei (strain Ss046).